Reading from the N-terminus, the 426-residue chain is Serine--tRNA ligase (426 aa).

Position 231-233 (231-233 (TAE)) interacts with L-serine. Residues 262 to 264 (RRE) and Val-278 each bind ATP. Position 285 (Glu-285) interacts with L-serine. 349 to 352 (EVSS) serves as a coordination point for ATP. L-serine is bound at residue Ser-384.

It belongs to the class-II aminoacyl-tRNA synthetase family. Type-1 seryl-tRNA synthetase subfamily. In terms of assembly, homodimer. The tRNA molecule binds across the dimer.

The protein localises to the cytoplasm. It carries out the reaction tRNA(Ser) + L-serine + ATP = L-seryl-tRNA(Ser) + AMP + diphosphate + H(+). The catalysed reaction is tRNA(Sec) + L-serine + ATP = L-seryl-tRNA(Sec) + AMP + diphosphate + H(+). It functions in the pathway aminoacyl-tRNA biosynthesis; selenocysteinyl-tRNA(Sec) biosynthesis; L-seryl-tRNA(Sec) from L-serine and tRNA(Sec): step 1/1. Functionally, catalyzes the attachment of serine to tRNA(Ser). Is also able to aminoacylate tRNA(Sec) with serine, to form the misacylated tRNA L-seryl-tRNA(Sec), which will be further converted into selenocysteinyl-tRNA(Sec). This is Serine--tRNA ligase from Chlamydia felis (strain Fe/C-56) (Chlamydophila felis).